The sequence spans 256 residues: Thiazole synthase (256 aa).

Lys96 functions as the Schiff-base intermediate with DXP in the catalytic mechanism. Residues Gly157, 183-184, and 205-206 each bind 1-deoxy-D-xylulose 5-phosphate; these read AG and NT.

Belongs to the ThiG family. As to quaternary structure, homotetramer. Forms heterodimers with either ThiH or ThiS.

It is found in the cytoplasm. It carries out the reaction [ThiS sulfur-carrier protein]-C-terminal-Gly-aminoethanethioate + 2-iminoacetate + 1-deoxy-D-xylulose 5-phosphate = [ThiS sulfur-carrier protein]-C-terminal Gly-Gly + 2-[(2R,5Z)-2-carboxy-4-methylthiazol-5(2H)-ylidene]ethyl phosphate + 2 H2O + H(+). The protein operates within cofactor biosynthesis; thiamine diphosphate biosynthesis. Catalyzes the rearrangement of 1-deoxy-D-xylulose 5-phosphate (DXP) to produce the thiazole phosphate moiety of thiamine. Sulfur is provided by the thiocarboxylate moiety of the carrier protein ThiS. In vitro, sulfur can be provided by H(2)S. The protein is Thiazole synthase of Bacillus cereus (strain ATCC 10987 / NRS 248).